A 519-amino-acid polypeptide reads, in one-letter code: Matrix metalloproteinase-B (519 aa).

A signal peptide spans 1–26; it reads MTKWSPNGNPLSTIYLILSLFTLAHT. The propeptide at 27 to 126 is activation peptide; the sequence is APTTQHSRTT…RQEQTKRTKR (100 aa). Polar residues predominate over residues 29–39; sequence TTQHSRTTTQL. Residues 29-50 are disordered; the sequence is TTQHSRTTTQLRLEDEDGGGGV. The Cysteine switch motif lies at 109-116; that stretch reads PRCTQTDV. Cys111, His208, Asp210, His232, His247, and His276 together coordinate Zn(2+). Glu277 is a catalytic residue. Zn(2+) contacts are provided by His280 and His286. N-linked (GlcNAc...) asparagine glycosylation is present at Asn341. The span at 391-402 shows a compositional bias: basic and acidic residues; the sequence is KDKRSYRGDSKI. Positions 391–410 are disordered; the sequence is KDKRSYRGDSKIPKCSSNNS. A glycan (N-linked (GlcNAc...) asparagine) is linked at Asn408.

It belongs to the peptidase M10A family. It depends on Zn(2+) as a cofactor. In terms of tissue distribution, expressed in spermatheca and spermathecal-uterine valve, weakly in vulva and anal muscles and in two cells in the head (probably RMEV and RMED motor neurons).

The protein localises to the secreted. Its subcellular location is the extracellular space. It localises to the extracellular matrix. Its activity is regulated as follows. Inhibited by human TIMP1 and TIMP2 and the broad MMP inhibitors BB94 (Batimastat) and CT543. Its function is as follows. Metalloprotease involved in molting, a process during larval stages in which a new cuticle is formed and the old cuticle is shed. Plays a role in thermotolerance probably by preventing the accumulation of oxidized lipoproteins and cholesterol. This is Matrix metalloproteinase-B from Caenorhabditis elegans.